Reading from the N-terminus, the 193-residue chain is Probable nicotinate-nucleotide adenylyltransferase (193 aa).

It belongs to the NadD family.

It catalyses the reaction nicotinate beta-D-ribonucleotide + ATP + H(+) = deamido-NAD(+) + diphosphate. It participates in cofactor biosynthesis; NAD(+) biosynthesis; deamido-NAD(+) from nicotinate D-ribonucleotide: step 1/1. In terms of biological role, catalyzes the reversible adenylation of nicotinate mononucleotide (NaMN) to nicotinic acid adenine dinucleotide (NaAD). The sequence is that of Probable nicotinate-nucleotide adenylyltransferase from Coprothermobacter proteolyticus (strain ATCC 35245 / DSM 5265 / OCM 4 / BT).